We begin with the raw amino-acid sequence, 118 residues long: V-type proton ATPase subunit G 1 (118 aa).

Ala2 is subject to N-acetylalanine. The disordered stretch occupies residues 25 to 90 (ARKRKARRLK…VQGMQSSQQR (66 aa)). Positions 35–56 (QAKEEAQMEVEQYRREREHEFQ) are enriched in basic and acidic residues. 2 stretches are compositionally biased toward polar residues: residues 57–69 (SKQQ…QGNL) and 78–89 (RHQVQGMQSSQQ).

Belongs to the V-ATPase G subunit family. In terms of assembly, V-ATPase is a heteromultimeric enzyme made up of two complexes: the ATP-hydrolytic V1 complex and the proton translocation V0 complex. The V1 complex consists of three catalytic AB heterodimers that form a heterohexamer, three peripheral stalks each consisting of EG heterodimers, one central rotor including subunits D and F, and the regulatory subunits C and H. The proton translocation complex V0 consists of the proton transport subunit a, a ring of proteolipid subunits c9c'', rotary subunit d, subunits e and f, and the accessory subunits ATP6AP1/Ac45 and ATP6AP2/PRR.

It is found in the apical cell membrane. Functionally, subunit of the V1 complex of vacuolar(H+)-ATPase (V-ATPase), a multisubunit enzyme composed of a peripheral complex (V1) that hydrolyzes ATP and a membrane integral complex (V0) that translocates protons. V-ATPase is responsible for acidifying and maintaining the pH of intracellular compartments and in some cell types, is targeted to the plasma membrane, where it is responsible for acidifying the extracellular environment. In aerobic conditions, involved in intracellular iron homeostasis, thus triggering the activity of Fe(2+) prolyl hydroxylase (PHD) enzymes, and leading to HIF1A hydroxylation and subsequent proteasomal degradation. The polypeptide is V-type proton ATPase subunit G 1 (ATP6V1G1) (Pan troglodytes (Chimpanzee)).